The chain runs to 292 residues: MLNTAREIIDVCNERGIKIYDLVLEEEIKNSHTTEEEIRKKLDAVIDVMHASATKNLTQSDVTEYKMIDGFAKRTYEYANSGKSIVGDFLAKAMAMAFSTSEVNASMGKIVAAPTAGSSGIMPAMLVAATEKYNFDRTTIQNGFLTSIGIGQVITKYATFAGAEGGCQAECGSASAMAAAALVEMLGGTVEQALHAASITIINVLGLVCDPIAGLVQYPCTFRNASGVINAFISADLALAGVESLVPFDEVVIAMGEVGNSMIEALRETGLGGLAGSKTGQKIRRDFLKEGD.

Belongs to the iron-sulfur dependent L-serine dehydratase family. As to quaternary structure, heterooctamer of four alpha chains and four beta chains. [4Fe-4S] cluster serves as cofactor.

The enzyme catalyses L-serine = pyruvate + NH4(+). The protein operates within carbohydrate biosynthesis; gluconeogenesis. The protein is L-serine dehydratase, alpha chain (sdhA) of Peptoniphilus asaccharolyticus (Peptostreptococcus asaccharolyticus).